Here is a 106-residue protein sequence, read N- to C-terminus: MAELISIDDTIDTAYDIFLEMAPDNLEPADVILFTAQFDDRGAAELVDVGDDWDDQVGFEVDKEIYAEVRIGLVNEENDVLDDVFARMLISRDPDQKFCHMLWKRD.

This sequence belongs to the putative dsDNA mimic protein family.

May act as a double-stranded DNA (dsDNA) mimic. Probably regulates the activity of a dsDNA-binding protein. The chain is Putative double-stranded DNA mimic protein VCM66_1163 from Vibrio cholerae serotype O1 (strain M66-2).